The chain runs to 746 residues: NAD(P)H-quinone oxidoreductase subunit 5, chloroplastic (746 aa).

The next 16 membrane-spanning stretches (helical) occupy residues 9–29 (WIIP…LLLV), 39–59 (IWAF…TNLS), 89–109 (IDSL…MVLI), 125–145 (FAYM…PNLI), 147–167 (IYIF…FWFT), 185–205 (GDFG…SFEF), 222–242 (NVLN…GAVA), 261–281 (TPIS…FLVA), 283–303 (LLPL…IGVI), 330–350 (LGYI…FHSI), 357–377 (ALLF…LGYS), 399–419 (ATFL…CFWS), 428–448 (WLYS…TAFY), 545–565 (TMLF…SVGI), 608–628 (IYSV…YGSV), and 726–746 (LFFS…YLYF).

The protein belongs to the complex I subunit 5 family. As to quaternary structure, NDH is composed of at least 16 different subunits, 5 of which are encoded in the nucleus.

The protein localises to the plastid. It localises to the chloroplast thylakoid membrane. It catalyses the reaction a plastoquinone + NADH + (n+1) H(+)(in) = a plastoquinol + NAD(+) + n H(+)(out). The catalysed reaction is a plastoquinone + NADPH + (n+1) H(+)(in) = a plastoquinol + NADP(+) + n H(+)(out). Functionally, NDH shuttles electrons from NAD(P)H:plastoquinone, via FMN and iron-sulfur (Fe-S) centers, to quinones in the photosynthetic chain and possibly in a chloroplast respiratory chain. The immediate electron acceptor for the enzyme in this species is believed to be plastoquinone. Couples the redox reaction to proton translocation, and thus conserves the redox energy in a proton gradient. The polypeptide is NAD(P)H-quinone oxidoreductase subunit 5, chloroplastic (ndhF) (Amborella trichopoda).